Reading from the N-terminus, the 326-residue chain is DNA repair protein RAD51 homolog 4 (326 aa).

A preferentially binds ssDNA region spans residues 1–83; sequence MGVLRAGLCP…ELKTSTAILS (83 aa). An ATP-binding site is contributed by 107-114; it reads GAPGSGKT.

This sequence belongs to the RecA family. RAD51 subfamily. As to quaternary structure, part of the BCDX2 complex consisting of RAD51B, RAD51C, RAD51D and XRCC2; the complex has a ring-like structure arranged into a flat disc around a central channel. In the absence of DNA, the BCDX2 subcomplex XRCC2:RAD51D formed a multimeric ring structure; in the presence of single-stranded DNA it formed a filamentous structure with the ssDNA. Interacts with SWSAP1 and ZSWIM7; involved in homologous recombination repair. Interacts with BLM; required for stimulation of BLM activity by the BCDX2 subcomplex XRCC2:RAD51D.

Its subcellular location is the nucleus. Functionally, involved in the homologous recombination repair (HRR) pathway of double-stranded DNA breaks arising during DNA replication or induced by DNA-damaging agents. Bind to single-stranded DNA (ssDNA) and has DNA-dependent ATPase activity. Part of the RAD51 paralog protein complex BCDX2 which acts in the BRCA1-BRCA2-dependent HR pathway. Upon DNA damage, BCDX2 acts downstream of BRCA2 recruitment and upstream of RAD51 recruitment. BCDX2 binds predominantly to the intersection of the four duplex arms of the Holliday junction and to junction of replication forks. The BCDX2 complex was originally reported to bind single-stranded DNA, single-stranded gaps in duplex DNA and specifically to nicks in duplex DNA. Involved in telomere maintenance. The BCDX2 subcomplex XRCC2:RAD51D can stimulate Holliday junction resolution by BLM. The protein is DNA repair protein RAD51 homolog 4 (RAD51D) of Bos taurus (Bovine).